The sequence spans 570 residues: Protein HEATR9 (570 aa).

The sequence is that of Protein HEATR9 (HEATR9) from Macaca fascicularis (Crab-eating macaque).